The sequence spans 440 residues: Serine hydroxymethyltransferase (440 aa).

Residues leucine 119 and 123–125 (GHL) contribute to the (6S)-5,6,7,8-tetrahydrofolate site. At lysine 228 the chain carries N6-(pyridoxal phosphate)lysine. 370–372 (SPF) contacts (6S)-5,6,7,8-tetrahydrofolate.

The protein belongs to the SHMT family. Homodimer. It depends on pyridoxal 5'-phosphate as a cofactor.

Its subcellular location is the cytoplasm. The catalysed reaction is (6R)-5,10-methylene-5,6,7,8-tetrahydrofolate + glycine + H2O = (6S)-5,6,7,8-tetrahydrofolate + L-serine. It functions in the pathway one-carbon metabolism; tetrahydrofolate interconversion. Its pathway is amino-acid biosynthesis; glycine biosynthesis; glycine from L-serine: step 1/1. In terms of biological role, catalyzes the reversible interconversion of serine and glycine with tetrahydrofolate (THF) serving as the one-carbon carrier. This reaction serves as the major source of one-carbon groups required for the biosynthesis of purines, thymidylate, methionine, and other important biomolecules. Also exhibits THF-independent aldolase activity toward beta-hydroxyamino acids, producing glycine and aldehydes, via a retro-aldol mechanism. The protein is Serine hydroxymethyltransferase of Chlorobaculum tepidum (strain ATCC 49652 / DSM 12025 / NBRC 103806 / TLS) (Chlorobium tepidum).